Consider the following 219-residue polypeptide: NAD(P)H-quinone oxidoreductase subunit I (219 aa).

4Fe-4S ferredoxin-type domains are found at residues 55 to 84 (GRIH…VDWV) and 95 to 124 (RNYS…MTEE). [4Fe-4S] cluster is bound by residues cysteine 64, cysteine 67, cysteine 70, cysteine 74, cysteine 104, cysteine 107, cysteine 110, and cysteine 114.

Belongs to the complex I 23 kDa subunit family. NDH-1 is composed of at least 11 different subunits. [4Fe-4S] cluster serves as cofactor.

It localises to the cellular thylakoid membrane. The enzyme catalyses a plastoquinone + NADH + (n+1) H(+)(in) = a plastoquinol + NAD(+) + n H(+)(out). The catalysed reaction is a plastoquinone + NADPH + (n+1) H(+)(in) = a plastoquinol + NADP(+) + n H(+)(out). NDH-1 shuttles electrons from an unknown electron donor, via FMN and iron-sulfur (Fe-S) centers, to quinones in the respiratory and/or the photosynthetic chain. The immediate electron acceptor for the enzyme in this species is believed to be plastoquinone. Couples the redox reaction to proton translocation, and thus conserves the redox energy in a proton gradient. This is NAD(P)H-quinone oxidoreductase subunit I from Prochlorococcus marinus (strain SARG / CCMP1375 / SS120).